The following is a 261-amino-acid chain: Transmembrane and immunoglobulin domain-containing protein 1 (261 aa).

A signal peptide spans 1–26 (MVWKITGPLQACQLLLVVLSLPQGRT). An Ig-like C2-type 1 domain is found at 27–113 (SSVLTVNGRT…LQRDQTVSVT (87 aa)). Over 27-215 (SSVLTVNGRT…DFHLLVKDKV (189 aa)) the chain is Extracellular. Cysteines 53 and 102 form a disulfide. N-linked (GlcNAc...) asparagine glycosylation is found at asparagine 57, asparagine 82, asparagine 92, asparagine 117, asparagine 157, and asparagine 189. Residues 121 to 206 (PPLLSGNGFQ…SSSLKMETMD (86 aa)) form the Ig-like C2-type 2 domain. A disulfide bridge links cysteine 142 with cysteine 194. A helical transmembrane segment spans residues 216–236 (FVMPAEPIIAACVVVVLTMAF). At 237–261 (ALFSRRKRIMKLCGKKNDPNSETAL) the chain is on the cytoplasmic side.

As to quaternary structure, homodimer. Post-translationally, N-glycosylated.

Its subcellular location is the cell membrane. It localises to the cytoplasm. In terms of biological role, may control cell-cell adhesion, cell migration and proliferation, cell morphology, and protects renal epithelial cells from oxidative cell injury to promote cell survival. In Mus musculus (Mouse), this protein is Transmembrane and immunoglobulin domain-containing protein 1.